The following is a 134-amino-acid chain: Profilin-2 (134 aa).

Cys13 and Cys118 form a disulfide bridge. The Involved in PIP2 interaction signature appears at Ala84–Thr100. Thr114 bears the Phosphothreonine mark.

Belongs to the profilin family. Occurs in many kinds of cells as a complex with monomeric actin in a 1:1 ratio. Phosphorylated by MAP kinases.

It localises to the cytoplasm. The protein resides in the cytoskeleton. Functionally, binds to actin and affects the structure of the cytoskeleton. At high concentrations, profilin prevents the polymerization of actin, whereas it enhances it at low concentrations. The polypeptide is Profilin-2 (Olea europaea (Common olive)).